A 445-amino-acid chain; its full sequence is Tubulin beta-2B chain (445 aa).

The short motif at methionine 1 to isoleucine 4 is the MREI motif element. Glutamine 11 contributes to the GTP binding site. Phosphoserine is present on serine 40. The residue at position 55 (threonine 55) is a Phosphothreonine. The residue at position 58 (lysine 58) is an N6-acetyllysine; alternate. At lysine 58 the chain carries N6-succinyllysine; alternate. Residue lysine 58 forms a Glycyl lysine isopeptide (Lys-Gly) (interchain with G-Cter in ubiquitin); alternate linkage. Residues glutamate 69, serine 138, glycine 142, threonine 143, and glycine 144 each coordinate GTP. Mg(2+) is bound at residue glutamate 69. The residue at position 172 (serine 172) is a Phosphoserine; by CDK1. Positions 204 and 226 each coordinate GTP. Phosphothreonine is present on residues threonine 285 and threonine 290. Residue arginine 318 is modified to Omega-N-methylarginine. Residue lysine 324 forms a Glycyl lysine isopeptide (Lys-Gly) (interchain with G-Cter in ubiquitin) linkage. The segment at tyrosine 422–alanine 445 is disordered. A compositionally biased stretch (acidic residues) spans threonine 429–alanine 445. Position 438 is a 5-glutamyl polyglutamate (glutamate 438).

This sequence belongs to the tubulin family. Dimer of alpha and beta chains. A typical microtubule is a hollow water-filled tube with an outer diameter of 25 nm and an inner diameter of 15 nM. Alpha-beta heterodimers associate head-to-tail to form protofilaments running lengthwise along the microtubule wall with the beta-tubulin subunit facing the microtubule plus end conferring a structural polarity. Microtubules usually have 13 protofilaments but different protofilament numbers can be found in some organisms and specialized cells. Requires Mg(2+) as cofactor. Some glutamate residues at the C-terminus are polyglycylated, resulting in polyglycine chains on the gamma-carboxyl group. Glycylation is mainly limited to tubulin incorporated into axonemes (cilia and flagella) whereas glutamylation is prevalent in neuronal cells, centrioles, axonemes, and the mitotic spindle. Both modifications can coexist on the same protein on adjacent residues, and lowering polyglycylation levels increases polyglutamylation, and reciprocally. The precise function of polyglycylation is still unclear. Post-translationally, some glutamate residues at the C-terminus are polyglutamylated, resulting in polyglutamate chains on the gamma-carboxyl group. Polyglutamylation plays a key role in microtubule severing by spastin (SPAST). SPAST preferentially recognizes and acts on microtubules decorated with short polyglutamate tails: severing activity by SPAST increases as the number of glutamates per tubulin rises from one to eight, but decreases beyond this glutamylation threshold. In terms of processing, phosphorylated on Ser-172 by CDK1 during the cell cycle, from metaphase to telophase, but not in interphase. This phosphorylation inhibits tubulin incorporation into microtubules.

It localises to the cytoplasm. It is found in the cytoskeleton. Its function is as follows. Tubulin is the major constituent of microtubules, a cylinder consisting of laterally associated linear protofilaments composed of alpha- and beta-tubulin heterodimers. Microtubules grow by the addition of GTP-tubulin dimers to the microtubule end, where a stabilizing cap forms. Below the cap, tubulin dimers are in GDP-bound state, owing to GTPase activity of alpha-tubulin. Implicated in neuronal migration. The sequence is that of Tubulin beta-2B chain (TUBB2B) from Bos taurus (Bovine).